Reading from the N-terminus, the 201-residue chain is Interferon-induced transmembrane protein 10 (201 aa).

Disordered regions lie at residues 1–23 and 60–88; these read MAQGPSQCPALLGAPASTTDGTQ and AAPAPEPSASPPMAPTLFPMESKSSKTDS. The Extracellular portion of the chain corresponds to 1-127; the sequence is MAQGPSQCPA…PDTTEVNDYY (127 aa). Pro residues predominate over residues 63 to 73; it reads APEPSASPPMA. Residues 128-148 traverse the membrane as a helical segment; that stretch reads LWSIFNFVYLNFCCLGFIALA. 2 S-palmitoyl cysteine lipidation sites follow: Cys-140 and Cys-141. The Cytoplasmic segment spans residues 149-173; that stretch reads YSLKVRDKKLLNDLNGAVEDAKTAR. The helical transmembrane segment at 174-194 threads the bilayer; it reads LFNITSSALAASCIILIFIFL. Residues 195–201 lie on the Extracellular side of the membrane; sequence RYPLTDY.

Belongs to the CD225/Dispanin family.

It localises to the cell membrane. The chain is Interferon-induced transmembrane protein 10 (Ifitm10) from Mus musculus (Mouse).